Consider the following 411-residue polypeptide: Peptidase T (411 aa).

H79 contacts Zn(2+). D81 is an active-site residue. D142 is a binding site for Zn(2+). E176 acts as the Proton acceptor in catalysis. The Zn(2+) site is built by E177, D199, and H381.

This sequence belongs to the peptidase M20B family. Zn(2+) is required as a cofactor.

The protein resides in the cytoplasm. It catalyses the reaction Release of the N-terminal residue from a tripeptide.. Its function is as follows. Cleaves the N-terminal amino acid of tripeptides. The sequence is that of Peptidase T from Geobacillus thermodenitrificans (strain NG80-2).